Here is a 616-residue protein sequence, read N- to C-terminus: Chaperone protein HscA (616 aa).

Belongs to the heat shock protein 70 family.

Chaperone involved in the maturation of iron-sulfur cluster-containing proteins. Has a low intrinsic ATPase activity which is markedly stimulated by HscB. Involved in the maturation of IscU. The protein is Chaperone protein HscA of Salmonella agona (strain SL483).